Consider the following 862-residue polypeptide: MSSRFFYGGGSDSDSSSSDEEELYSDREEEEKSEEEESSEEEDETSEEEESDEETGAKKFLKDVASDSEEEEEEEKVTVVKSAKDKRLDELENTIKLIENAKKINDWAVISTEFDKLNRQVAKITQSGPTPKIYIKTVADLEDFVNETVAKQKSGDKKLNASQAKGFNAAKQRIKKNNKDYANLINKYRKDKEDFMESDDEEATPVIAAPRITKLERIEAPAAAIDDDGFATVGRGGKTLQYTPESILKHLRVIVESRGKKNTDRMEQIRTMEKLLEVAQTPYQRIRVYLTLISTRFDLTSTSSANYMAVDQWKSAEQDFSSLLSVLENNRDHVVSEGAEEWEDDEKQPTIAPGETLYIPGSIVSFAERLDDELTRSLQHIDPHTAEYIERLSDEKLLYTDLVRAQAYVEGLNEAEKTDPRQDSVNRVVMRRLEHVYFKPSQVITILEDATWKALPSELDSSITPRASSGNVENLVLSLCNYLFKYSDGIIRARAMLCQIYFLALHDQYYRSRDLMLMSHLTENISNFDVSTQILFNRTLVQIGLCAFRSGLIYEAQNTLSEVCGSGRQKELLAQGIIMQRYSTVSPEQERLERQRQLPFHMHINLELLECIYLTSSMFLEVPLMAQTSSSPEMKRRVISKTFRRMLDYNERQVFTGPAENTRDGVIMSAKFLAAGDWKKAAEMLNSIKIWDLMPQPDKIKEMLSQQIQEEGLRTYLFTYAPFYDSLSIATLSNMFELSEKKISAIISRMISHEELAAALDQVNNAIVFRKGVELSRLQSQIVTLADKSMNLLEANEKTLEQRTQGMANAFQRDQGAGARGGRGSGRGGQARGGPRFPGGQQGRRPGGQQFGGGALGGAIKA.

The segment at 1-81 is disordered; that stretch reads MSSRFFYGGG…EEEEKVTVVK (81 aa). Residues 17–54 show a composition bias toward acidic residues; sequence SSDEEELYSDREEEEKSEEEESSEEEDETSEEEESDEE. The segment covering 55 to 65 has biased composition (basic and acidic residues); it reads TGAKKFLKDVA. A compositionally biased stretch (acidic residues) spans 66-75; the sequence is SDSEEEEEEE. Residues 600-774 enclose the PCI domain; it reads FHMHINLELL…NAIVFRKGVE (175 aa). Residues 813-862 are disordered; the sequence is RDQGAGARGGRGSGRGGQARGGPRFPGGQQGRRPGGQQFGGGALGGAIKA. Residues 818–862 show a composition bias toward gly residues; it reads GARGGRGSGRGGQARGGPRFPGGQQGRRPGGQQFGGGALGGAIKA.

The protein belongs to the eIF-3 subunit C family. As to quaternary structure, component of the eukaryotic translation initiation factor 3 (eIF-3) complex.

It is found in the cytoplasm. Component of the eukaryotic translation initiation factor 3 (eIF-3) complex, which is involved in protein synthesis of a specialized repertoire of mRNAs and, together with other initiation factors, stimulates binding of mRNA and methionyl-tRNAi to the 40S ribosome. The eIF-3 complex specifically targets and initiates translation of a subset of mRNAs involved in cell proliferation. The polypeptide is Eukaryotic translation initiation factor 3 subunit C (nip1) (Neosartorya fischeri (strain ATCC 1020 / DSM 3700 / CBS 544.65 / FGSC A1164 / JCM 1740 / NRRL 181 / WB 181) (Aspergillus fischerianus)).